A 124-amino-acid chain; its full sequence is MSRILSHAKKNYRKAIVIESLLLVVFYLLIYGWQRQSAVDFSYGFLSAFLPFCTFIFIIFYRKQNFSTKLTALYRAEAIKFILTMVFIIIAIKWLFVINFIAFFVGFLLALVLNNIIPLILNKI.

The next 3 membrane-spanning stretches (helical) occupy residues 14 to 34, 41 to 61, and 85 to 105; these read KAIV…YGWQ, FSYG…IIFY, and MVFI…AFFV.

The protein resides in the cell membrane. This is an uncharacterized protein from Haemophilus influenzae (strain ATCC 51907 / DSM 11121 / KW20 / Rd).